The following is a 371-amino-acid chain: Probable alcohol acetyltransferase (371 aa).

Catalysis depends on charge relay system residues S124 and H295. Residues A325 to T352 form a disordered region. A compositionally biased stretch (basic and acidic residues) spans A327 to Y336.

This sequence belongs to the AB hydrolase superfamily.

Its function is as follows. Probable alcohol acetyltransferase that uses acetyl-CoA to synthesize acetate esters from various alcohols. Not involved in the synthesis of ethyl acetate. In Cyberlindnera fabianii (Yeast), this protein is Probable alcohol acetyltransferase (EAT2).